A 114-amino-acid polypeptide reads, in one-letter code: Prefoldin subunit 6 (114 aa).

The residue at position 2 (Ser-2) is an N-acetylserine.

Belongs to the prefoldin subunit beta family. Heterohexamer of two PFD-alpha type and four PFD-beta type subunits.

The protein localises to the nucleus. Binds specifically to cytosolic chaperonin (c-CPN) and transfers target proteins to it. Binds to nascent polypeptide chain and promotes folding in an environment in which there are many competing pathways for nonnative proteins. This is Prefoldin subunit 6 (YKE2) from Saccharomyces cerevisiae (strain ATCC 204508 / S288c) (Baker's yeast).